We begin with the raw amino-acid sequence, 381 residues long: Selenoprotein P (381 aa).

Residues 1 to 19 form the signal peptide; the sequence is MWRSLGLALALCLLPSGGT. An N-linked (GlcNAc...) asparagine glycan is attached at N46. Position 59 (U59) is a non-standard amino acid, selenocysteine. N-linked (GlcNAc...) (complex) asparagine glycosylation is present at N83. 3 N-linked (GlcNAc...) asparagine glycosylation sites follow: N119, N128, and N174. The segment at 200 to 268 is disordered; it reads TPSPHYHHEH…ENRDMPASED (69 aa). Basic residues predominate over residues 204–216; sequence HYHHEHHHNHGHQ. Positions 218–230 are enriched in polar residues; that stretch reads LGSSELSENQQPG. Over residues 243–255 the composition is skewed to basic residues; it reads LHHHHKHKGQHRQ. Phosphoserine is present on S266. Non-standard amino acids (selenocysteine) are located at U300, U318, and U330. N338 carries an N-linked (GlcNAc...) asparagine glycan. 6 non-standard amino acids (selenocysteine) are found at residues U345, U352, U367, U369, U376, and U378. Residues 355–381 form a disordered region; it reads SQQLIPTEASASURUKNQAKKUEUPSN.

Belongs to the selenoprotein P family. Phosphorylation sites are present in the extracellular medium. Made in the liver and heart and secreted into the plasma. It is also found in the kidney.

Its subcellular location is the secreted. Might be responsible for some of the extracellular antioxidant defense properties of selenium or might be involved in the transport of selenium. May supply selenium to tissues such as brain and testis. The protein is Selenoprotein P of Homo sapiens (Human).